We begin with the raw amino-acid sequence, 360 residues long: Phospho-N-acetylmuramoyl-pentapeptide-transferase (360 aa).

The Periplasmic portion of the chain corresponds to 1-25 (MLVWLAEHLVKYYSGFNVFSYLTFR). The chain crosses the membrane as a helical span at residues 26-46 (AIVSLLTALFISLWMGPRMIA). The Cytoplasmic segment spans residues 47–71 (HLQKLSFGQVVRNDGPESHFSKRGT). A helical transmembrane segment spans residues 72–92 (PTMGGIMILTAIVISVLLWAY). A topological domain (periplasmic) is located at residue proline 93. A helical transmembrane segment spans residues 94–114 (SNPYVWCVLVVLVGYGIIGFV). At 115-131 (DDYRKVVRKDTKGLIAR) the chain is on the cytoplasmic side. The helical transmembrane segment at 132–152 (WKYFWMSVIALGVAFALYLAG) threads the bilayer. Residues 153-167 (KDTPATQLVVPFFKD) lie on the Periplasmic side of the membrane. Residues 168–188 (VMPQLGLFYILLAYFVIVGTG) form a helical membrane-spanning segment. The Cytoplasmic segment spans residues 189-198 (NAVNLTDGLD). Residues 199–219 (GLAIMPTVFVAGGFALVAWAT) traverse the membrane as a helical segment. The Periplasmic segment spans residues 220–235 (GNMNFASYLHIPYLRH). The chain crosses the membrane as a helical span at residues 236–256 (AGELVIVCTAIVGAGLGFLWF). Topologically, residues 257-262 (NTYPAQ) are cytoplasmic. A helical membrane pass occupies residues 263-283 (VFMGDVGSLALGGALGIIAVL). The Periplasmic portion of the chain corresponds to 284 to 287 (LRQE). Residues 288–308 (FLLVIMGGVFVVETLSVILQV) traverse the membrane as a helical segment. The Cytoplasmic segment spans residues 309 to 337 (GSFKLRGQRIFRMAPIHHHYELKGWPEPR). A helical membrane pass occupies residues 338-358 (VIVRFWIISLMLVLIGLATLK). Over 359-360 (VR) the chain is Periplasmic.

Belongs to the glycosyltransferase 4 family. MraY subfamily. Mg(2+) is required as a cofactor.

It localises to the cell inner membrane. The catalysed reaction is UDP-N-acetyl-alpha-D-muramoyl-L-alanyl-gamma-D-glutamyl-meso-2,6-diaminopimeloyl-D-alanyl-D-alanine + di-trans,octa-cis-undecaprenyl phosphate = di-trans,octa-cis-undecaprenyl diphospho-N-acetyl-alpha-D-muramoyl-L-alanyl-D-glutamyl-meso-2,6-diaminopimeloyl-D-alanyl-D-alanine + UMP. The protein operates within cell wall biogenesis; peptidoglycan biosynthesis. Catalyzes the initial step of the lipid cycle reactions in the biosynthesis of the cell wall peptidoglycan: transfers peptidoglycan precursor phospho-MurNAc-pentapeptide from UDP-MurNAc-pentapeptide onto the lipid carrier undecaprenyl phosphate, yielding undecaprenyl-pyrophosphoryl-MurNAc-pentapeptide, known as lipid I. This Escherichia coli O7:K1 (strain IAI39 / ExPEC) protein is Phospho-N-acetylmuramoyl-pentapeptide-transferase.